Consider the following 150-residue polypeptide: Small ribosomal subunit protein uS7c (150 aa).

It belongs to the universal ribosomal protein uS7 family. As to quaternary structure, part of the 30S ribosomal subunit.

The protein resides in the plastid. The protein localises to the chloroplast. One of the primary rRNA binding proteins, it binds directly to 16S rRNA where it nucleates assembly of the head domain of the 30S subunit. The polypeptide is Small ribosomal subunit protein uS7c (rps7) (Huperzia lucidula (Shining clubmoss)).